A 956-amino-acid chain; its full sequence is Dual specificity protein kinase YAK1 homolog (956 aa).

Positions 122 to 464 (YIVKDLLGHG…PFQAAKHPFI (343 aa)) constitute a Protein kinase domain. ATP-binding positions include 128–136 (LGHGTFGQV) and Lys-151. Ser-222 carries the post-translational modification Phosphoserine. The active-site Proton acceptor is the Asp-249. 3 disordered regions span residues 620–657 (LGTS…HGSP), 672–781 (SAGY…NYSD), and 806–956 (GSTD…GSIA). Polar residues predominate over residues 622–636 (TSPSQFTPNTNNQFL). Over residues 672 to 691 (SAGYSGGSQSQDSSLSQAQG) the composition is skewed to low complexity. Polar residues-rich tracts occupy residues 697–713 (FYQN…SPSR), 725–757 (QTQG…SSTA), and 806–817 (GSTDASSYSRRF). The segment covering 818–830 (NSNASTSSSNPTT) has biased composition (low complexity). Composition is skewed to polar residues over residues 838–849 (QAFSQVETGSPP), 870–884 (VSQN…QPPQ), and 902–912 (MNAQLPPSNTN). Residues 913-924 (SGGQQRSPRSSS) show a composition bias toward low complexity. Residues 937–947 (NHVPNVPSTSH) show a composition bias toward polar residues.

This sequence belongs to the protein kinase superfamily. Ser/Thr protein kinase family. Post-translationally, autophosphorylated at Ser-222.

It catalyses the reaction L-seryl-[protein] + ATP = O-phospho-L-seryl-[protein] + ADP + H(+). The enzyme catalyses L-threonyl-[protein] + ATP = O-phospho-L-threonyl-[protein] + ADP + H(+). The catalysed reaction is L-tyrosyl-[protein] + ATP = O-phospho-L-tyrosyl-[protein] + ADP + H(+). Functionally, dual specificity protein kinase that phosphorylates ANN1, ANN2 and CP29B at serine and threonine residues, and ANN1, ANN2 and ANN4 at tyrosine residues. May regulate the phosphorylation status of annexin proteins. Acts as a positive regulator in abscisic acid (ABA)-mediated regulation of postgermination growth and drought response. May regulate the expression of ABA-responsive genes such as RD22, RD29A, LTI65/RD29B and RAB18. This chain is Dual specificity protein kinase YAK1 homolog, found in Arabidopsis thaliana (Mouse-ear cress).